A 150-amino-acid chain; its full sequence is Large ribosomal subunit protein bL9 (150 aa).

This sequence belongs to the bacterial ribosomal protein bL9 family.

In terms of biological role, binds to the 23S rRNA. The polypeptide is Large ribosomal subunit protein bL9 (Vibrio campbellii (strain ATCC BAA-1116)).